Here is a 593-residue protein sequence, read N- to C-terminus: Copine-5 (593 aa).

In terms of domain architecture, C2 1 spans 2–134 (EQPEDMASLS…SPGSRLEKPL (133 aa)). Serine 19 carries the post-translational modification Phosphoserine. Ca(2+)-binding residues include aspartate 38, aspartate 44, aspartate 98, aspartate 100, serine 103, lysine 108, and aspartate 110. Position 103 is a phosphoserine (serine 103). Phosphoserine is present on serine 140. The C2 2 domain maps to 161–284 (KCGTIILSAE…ARGQSQFNIY (124 aa)). The Ca(2+) site is built by aspartate 192, aspartate 198, aspartate 254, aspartate 256, and aspartate 262. One can recognise a VWFA domain in the interval 328-554 (NFTVAIDFTA…DVLAEIPDQL (227 aa)). The disordered stretch occupies residues 562 to 593 (GIRPRPPPAAPTHSPSQSPARTPPASPLHTHI). Residues 572–581 (PTHSPSQSPA) are compositionally biased toward low complexity.

The protein belongs to the copine family. Requires Ca(2+) as cofactor. As to expression, expressed in the brain, heart, stomach, spleen, lymph node and testis. Expressed in melanocytes.

It is found in the perikaryon. Its subcellular location is the cell projection. In terms of biological role, probable calcium-dependent phospholipid-binding protein that may play a role in calcium-mediated intracellular processes. Plays a role in dendrite formation by melanocytes. In Homo sapiens (Human), this protein is Copine-5.